Here is a 519-residue protein sequence, read N- to C-terminus: (3S,6E)-nerolidol synthase 1 (519 aa).

5 residues coordinate Mg(2+): Asp-273, Asp-277, Asp-417, Ser-421, and Glu-425. A DDXXD motif motif is present at residues 273-277 (DDIFD).

Belongs to the terpene synthase family. Tpsg subfamily. Requires Mg(2+) as cofactor. Mn(2+) is required as a cofactor. In terms of tissue distribution, expressed in receptacle tissue. Not detected in leaves or green fruit.

The protein localises to the cytoplasm. The protein resides in the cytosol. The catalysed reaction is (2E,6E)-farnesyl diphosphate + H2O = (3S,6E)-nerolidol + diphosphate. Its pathway is secondary metabolite biosynthesis; terpenoid biosynthesis. Its function is as follows. Involved in monoterpene (C10) and sesquiterpene (C15) biosynthesis. Converts geranyl diphosphate (GPP) into S-linalool and farnesyl diphosphate (FPP) into (3S)-E-nerolidol. Exclusively present and highly expressed in the fruit of cultivated (octaploid) varieties. This Fragaria ananassa (Strawberry) protein is (3S,6E)-nerolidol synthase 1.